We begin with the raw amino-acid sequence, 185 residues long: Peptidyl-tRNA hydrolase (185 aa).

Tyr-14 is a binding site for tRNA. His-19 serves as the catalytic Proton acceptor. Residues Phe-63, Asn-65, and Asn-111 each coordinate tRNA.

Belongs to the PTH family. As to quaternary structure, monomer.

It is found in the cytoplasm. The catalysed reaction is an N-acyl-L-alpha-aminoacyl-tRNA + H2O = an N-acyl-L-amino acid + a tRNA + H(+). In terms of biological role, hydrolyzes ribosome-free peptidyl-tRNAs (with 1 or more amino acids incorporated), which drop off the ribosome during protein synthesis, or as a result of ribosome stalling. Catalyzes the release of premature peptidyl moieties from peptidyl-tRNA molecules trapped in stalled 50S ribosomal subunits, and thus maintains levels of free tRNAs and 50S ribosomes. The chain is Peptidyl-tRNA hydrolase from Desulfitobacterium hafniense (strain Y51).